The primary structure comprises 345 residues: Probable dual-specificity RNA methyltransferase RlmN (345 aa).

Glutamate 98 (proton acceptor) is an active-site residue. Positions 104–332 (TYKRLTVCVS…VSIRYSRGLE (229 aa)) constitute a Radical SAM core domain. Residues cysteine 111 and cysteine 337 are joined by a disulfide bond. The [4Fe-4S] cluster site is built by cysteine 118, cysteine 122, and cysteine 125. S-adenosyl-L-methionine-binding positions include 165–166 (GE), serine 195, 218–220 (SLH), and asparagine 294. The S-methylcysteine intermediate role is filled by cysteine 337.

It belongs to the radical SAM superfamily. RlmN family. [4Fe-4S] cluster serves as cofactor.

It is found in the cytoplasm. It carries out the reaction adenosine(2503) in 23S rRNA + 2 reduced [2Fe-2S]-[ferredoxin] + 2 S-adenosyl-L-methionine = 2-methyladenosine(2503) in 23S rRNA + 5'-deoxyadenosine + L-methionine + 2 oxidized [2Fe-2S]-[ferredoxin] + S-adenosyl-L-homocysteine. It catalyses the reaction adenosine(37) in tRNA + 2 reduced [2Fe-2S]-[ferredoxin] + 2 S-adenosyl-L-methionine = 2-methyladenosine(37) in tRNA + 5'-deoxyadenosine + L-methionine + 2 oxidized [2Fe-2S]-[ferredoxin] + S-adenosyl-L-homocysteine. In terms of biological role, specifically methylates position 2 of adenine 2503 in 23S rRNA and position 2 of adenine 37 in tRNAs. This Trichodesmium erythraeum (strain IMS101) protein is Probable dual-specificity RNA methyltransferase RlmN.